The primary structure comprises 964 residues: Coatomer subunit beta (964 aa).

5 HEAT repeats span residues 129-166 (ELLE…NFDW), 238-275 (AERS…APTA), 314-351 (KVMQ…SRNI), 393-430 (DVAA…KFPA), and 466-506 (SQIL…QQGS). The segment covering 490–501 (RRLAGDQTEEQK) has biased composition (basic and acidic residues). The interval 490 to 530 (RRLAGDQTEEQKQQQGSAGGNAAGSAAEGSGSGNASNKVTS) is disordered. Positions 512 to 526 (AGSAAEGSGSGNASN) are enriched in low complexity.

In terms of assembly, oligomeric complex that consists of at least the alpha, beta, beta', gamma, delta, epsilon and zeta subunits. As to expression, during oogenesis and spermatogenesis, expressed in ovariole, germarium, testis tip and testis.

It is found in the cytoplasm. The protein resides in the golgi apparatus membrane. It localises to the cytoplasmic vesicle. The protein localises to the COPI-coated vesicle membrane. The coatomer is a cytosolic protein complex that binds to dilysine motifs and reversibly associates with Golgi non-clathrin-coated vesicles, which further mediate biosynthetic protein transport from the ER, via the Golgi up to the trans Golgi network. Coatomer complex is required for budding from Golgi membranes, and is essential for the retrograde Golgi-to-ER transport of dilysine-tagged proteins. Required for limiting lipid storage in lipid droplets. This chain is Coatomer subunit beta, found in Drosophila melanogaster (Fruit fly).